We begin with the raw amino-acid sequence, 623 residues long: uncharacterized protein (623 aa).

The stretch at 24 to 51 forms a coiled coil; that stretch reads RALVQKDELAQASQDVEDMRDCYDSLLN. 5 disordered regions span residues 148–170, 240–343, 362–393, 454–531, and 585–607; these read TRQREKGRSKGGKGETFSPQQLQ, FSGL…TTPP, ALPTPVETTRSPSSTTSPGHKNVGSSNPTKAI, SFSG…LGYS, and KKLGTPSPPLTPMSLIHPPPQAL. Over residues 243–259 the composition is skewed to acidic residues; it reads LEDDDGDDEIENNENDG. Over residues 328-343 the composition is skewed to polar residues; the sequence is VSQSAPLFPENRTTPP. Over residues 364–379 the composition is skewed to low complexity; that stretch reads PTPVETTRSPSSTTSP. The segment covering 384–393 has biased composition (polar residues); sequence VGSSNPTKAI. Positions 484 to 495 are enriched in low complexity; the sequence is PVSKLPKVSSSP. The span at 496–506 shows a compositional bias: polar residues; the sequence is TASPTFVSTPK. Residues 590-606 are compositionally biased toward pro residues; the sequence is PSPPLTPMSLIHPPPQA.

This is an uncharacterized protein from Arabidopsis thaliana (Mouse-ear cress).